The sequence spans 410 residues: UDP-N-acetylglucosamine--N-acetylmuramyl-(pentapeptide) pyrophosphoryl-undecaprenol N-acetylglucosamine transferase (410 aa).

The disordered stretch occupies residues M1–D34. Residues A14–D34 are compositionally biased toward low complexity. Residues T45–G47, N167, R204, S238, and Q334 contribute to the UDP-N-acetyl-alpha-D-glucosamine site.

It belongs to the glycosyltransferase 28 family. MurG subfamily.

The protein resides in the cell membrane. It carries out the reaction di-trans,octa-cis-undecaprenyl diphospho-N-acetyl-alpha-D-muramoyl-L-alanyl-D-glutamyl-meso-2,6-diaminopimeloyl-D-alanyl-D-alanine + UDP-N-acetyl-alpha-D-glucosamine = di-trans,octa-cis-undecaprenyl diphospho-[N-acetyl-alpha-D-glucosaminyl-(1-&gt;4)]-N-acetyl-alpha-D-muramoyl-L-alanyl-D-glutamyl-meso-2,6-diaminopimeloyl-D-alanyl-D-alanine + UDP + H(+). Its pathway is cell wall biogenesis; peptidoglycan biosynthesis. In terms of biological role, cell wall formation. Catalyzes the transfer of a GlcNAc subunit on undecaprenyl-pyrophosphoryl-MurNAc-pentapeptide (lipid intermediate I) to form undecaprenyl-pyrophosphoryl-MurNAc-(pentapeptide)GlcNAc (lipid intermediate II). This Mycobacterium bovis (strain ATCC BAA-935 / AF2122/97) protein is UDP-N-acetylglucosamine--N-acetylmuramyl-(pentapeptide) pyrophosphoryl-undecaprenol N-acetylglucosamine transferase.